The sequence spans 104 residues: MIKAKKTYVLKLYVAGNTPNSVRALKTLKNILEQEFEGVYALKVIDVLKSPQLAEEDKILATPTLSKILPPPVRKIIGDLSDRERVLIGLDLLYEELSEGDFEE.

It belongs to the KaiB family. The KaiABC complex composition changes during the circadian cycle to control KaiC phosphorylation. Complexes KaiC(6), KaiA(2-4):KaiC(6), KaiB(6):KaiC(6) and KaiC(6):KaiB(6):KaiA(12) are among the most important forms, many form cooperatively. Undergoes a major conformational rearrangment; in the free state forms homotetramers as a dimer of dimers. When bound to the CI domain of KaiC switches to a monomeric thioredoxin-fold (KaiB(fs)). KaiB(fs) binds CikA, leading it to dephosphorylate phospho-RpaA.

Functionally, key component of the KaiABC oscillator complex, which constitutes the main circadian regulator in cyanobacteria. Complex composition changes during the circadian cycle to control KaiC phosphorylation. KaiA stimulates KaiC autophosphorylation, while KaiB sequesters KaiA, leading to KaiC autodephosphorylation. Phospho-Ser-431 KaiC accumulation triggers binding of KaiB to form the KaiB(6):KaiC(6) complex, leading to changes in output regulators CikA and SasA. KaiB switches to a thioredoxin-like fold (KaiB(fs)) when bound to KaiC. KaiB(6):KaiC(6) formation exposes a site for KaiA binding that sequesters KaiA from KaiC, making the KaiC(6):KaiB(6):KaiA(12) complex that results in KaiC autodephosphorylation. In terms of biological role, a metamorphic protein which reversibly switches between an inactive tetrameric fold and a rare, thioredoxin-like monomeric fold (KaiB(fs)). KaiB(fs) binds phospho-KaiC, KaiA and CikA. KaiA and CikA compete for binding to KaiB(fs), and KaiB(fs) and SasA compete for binding to KaiC, thus the clock oscillator and output signal pathway are tightly coupled. The sequence is that of Circadian clock oscillator protein KaiB from Nostoc punctiforme (strain ATCC 29133 / PCC 73102).